Here is a 274-residue protein sequence, read N- to C-terminus: Large ribosomal subunit protein uL2 (274 aa).

Disordered stretches follow at residues 28 to 54 and 224 to 274; these read APHA…TRHI and VAMN…RRRK. A compositionally biased stretch (basic and acidic residues) spans 263–274; that stretch reads KRTDKMIVRRRK.

The protein belongs to the universal ribosomal protein uL2 family. In terms of assembly, part of the 50S ribosomal subunit. Forms a bridge to the 30S subunit in the 70S ribosome.

In terms of biological role, one of the primary rRNA binding proteins. Required for association of the 30S and 50S subunits to form the 70S ribosome, for tRNA binding and peptide bond formation. It has been suggested to have peptidyltransferase activity; this is somewhat controversial. Makes several contacts with the 16S rRNA in the 70S ribosome. This chain is Large ribosomal subunit protein uL2, found in Pseudomonas syringae pv. tomato (strain ATCC BAA-871 / DC3000).